Reading from the N-terminus, the 370-residue chain is tRNA-specific 2-thiouridylase MnmA (370 aa).

ATP-binding positions include 19–26 and Leu-45; that span reads AMSGGVDS. The active-site Nucleophile is Cys-113. An intrachain disulfide couples Cys-113 to Cys-209. Residue Gly-137 participates in ATP binding. Residues 159 to 161 form an interaction with tRNA region; that stretch reads RDQ. Cys-209 functions as the Cysteine persulfide intermediate in the catalytic mechanism.

This sequence belongs to the MnmA/TRMU family.

The protein localises to the cytoplasm. It carries out the reaction S-sulfanyl-L-cysteinyl-[protein] + uridine(34) in tRNA + AH2 + ATP = 2-thiouridine(34) in tRNA + L-cysteinyl-[protein] + A + AMP + diphosphate + H(+). Catalyzes the 2-thiolation of uridine at the wobble position (U34) of tRNA, leading to the formation of s(2)U34. This chain is tRNA-specific 2-thiouridylase MnmA, found in Zymomonas mobilis subsp. mobilis (strain ATCC 31821 / ZM4 / CP4).